A 333-amino-acid chain; its full sequence is MQSSVNEFLTPRHIDVQVVSQTRAKITLEPLERGFGHTLGNALRRILLSSMPGCAVVEAEIDGVLHEYSAIEGVQEDVIEILLNLKGLAIKLHGRDEVTLTLAKKGSGVVTAADIQLDHDVEIINGDHVIANLADNGALNMKLKVARGRGYEPADARQSDEDESRSIGRLQLDASFSPVRRVSYVVENARVEQRTNLDKLVLDLETNGTLDPEEAIRRAATILQQQLAAFVDLKGDSEPVVEEQEDEIDPILLRPVDDLELTVRSANCLKAENIYYIGDLIQRTEVELLKTPNLGKKSLTEIKDVLASRGLSLGMRLDNWPPASLKKDDKATA.

Positions 1–234 (MQSSVNEFLT…QQLAAFVDLK (234 aa)) are alpha N-terminal domain (alpha-NTD). The tract at residues 248–333 (IDPILLRPVD…SLKKDDKATA (86 aa)) is alpha C-terminal domain (alpha-CTD).

This sequence belongs to the RNA polymerase alpha chain family. As to quaternary structure, homodimer. The RNAP catalytic core consists of 2 alpha, 1 beta, 1 beta' and 1 omega subunit. When a sigma factor is associated with the core the holoenzyme is formed, which can initiate transcription.

The catalysed reaction is RNA(n) + a ribonucleoside 5'-triphosphate = RNA(n+1) + diphosphate. In terms of biological role, DNA-dependent RNA polymerase catalyzes the transcription of DNA into RNA using the four ribonucleoside triphosphates as substrates. The polypeptide is DNA-directed RNA polymerase subunit alpha (Pseudomonas aeruginosa (strain UCBPP-PA14)).